Here is a 258-residue protein sequence, read N- to C-terminus: Granzyme M (258 aa).

The Peptidase S1 domain occupies 21 to 250 (IIGGREAVPH…YSSWIRKVIG (230 aa)). The cysteines at positions 46 and 62 are disulfide-linked. Residues His-61 and Asp-107 each act as charge relay system in the active site. A disordered region spans residues 122-141 (NVKPLALPRKPRDKPAEGSR). 3 disulfides stabilise this stretch: Cys-142/Cys-210, Cys-173/Cys-189, and Cys-200/Cys-226. Asn-174 carries N-linked (GlcNAc...) asparagine glycosylation. Ser-204 serves as the catalytic Charge relay system. Asn-225 carries N-linked (GlcNAc...) asparagine glycosylation.

The protein belongs to the peptidase S1 family. Granzyme subfamily.

It localises to the secreted. The protein localises to the cytoplasmic granule. In terms of biological role, cleaves peptide substrates after methionine, leucine, and norleucine. Physiological substrates include EZR, alpha-tubulins and the apoptosis inhibitor BIRC5/Survivin. Promotes caspase activation and subsequent apoptosis of target cells. The chain is Granzyme M (Gzmm) from Rattus norvegicus (Rat).